The following is a 176-amino-acid chain: MSRVGKSPIALQGAEVKLADGAITVKGPLGTITQAINPLVNVANNDGTLNLSPVDESREANALSGTMRAIIANAVHGVTKGFERKLTLVGVGYRAQAQGDKLNLSLGFSHPVVHQMPEGVKAETPTQTEIVIKGINKQQVGQVAAEVRGYRPPEPYKGKGVRYSDEVVILKETKKK.

The protein belongs to the universal ribosomal protein uL6 family. As to quaternary structure, part of the 50S ribosomal subunit.

In terms of biological role, this protein binds to the 23S rRNA, and is important in its secondary structure. It is located near the subunit interface in the base of the L7/L12 stalk, and near the tRNA binding site of the peptidyltransferase center. This Burkholderia ambifaria (strain MC40-6) protein is Large ribosomal subunit protein uL6.